The primary structure comprises 153 residues: Troponin C (153 aa).

Residue Ala-1 is modified to Blocked amino end (Ala). 4 consecutive EF-hand domains span residues 10–45 (EQVQ…LGQT), 46–81 (FEEK…FLVE), 86–121 (AMQE…LDDK), and 122–153 (LTED…MMTG). Residues Asp-59, Asp-61, Ser-63, Glu-65, Glu-70, Asp-99, Asp-110, Asp-135, Asp-137, Ser-139, Thr-141, and Glu-146 each contribute to the Ca(2+) site.

It belongs to the troponin C family.

In terms of biological role, troponin is the central regulatory protein of striated muscle contraction. Tn consists of three components: Tn-I which is the inhibitor of actomyosin ATPase, Tn-T which contains the binding site for tropomyosin and Tn-C. The binding of calcium to Tn-C abolishes the inhibitory action of Tn on actin filaments. The polypeptide is Troponin C (Tachypleus tridentatus (Japanese horseshoe crab)).